The following is a 319-amino-acid chain: tRNA dimethylallyltransferase (319 aa).

9 to 16 (GPTAVGKS) lines the ATP pocket. 11-16 (TAVGKS) contributes to the substrate binding site. The interval 39 to 42 (DSMQ) is interaction with substrate tRNA.

This sequence belongs to the IPP transferase family. In terms of assembly, monomer. The cofactor is Mg(2+).

The enzyme catalyses adenosine(37) in tRNA + dimethylallyl diphosphate = N(6)-dimethylallyladenosine(37) in tRNA + diphosphate. Its function is as follows. Catalyzes the transfer of a dimethylallyl group onto the adenine at position 37 in tRNAs that read codons beginning with uridine, leading to the formation of N6-(dimethylallyl)adenosine (i(6)A). The chain is tRNA dimethylallyltransferase from Thermobifida fusca (strain YX).